A 428-amino-acid chain; its full sequence is Histidinol dehydrogenase (428 aa).

Residues Tyr-127, Gln-189, and Asn-212 each coordinate NAD(+). Residues Ser-235, Gln-257, and His-260 each contribute to the substrate site. Gln-257 and His-260 together coordinate Zn(2+). Active-site proton acceptor residues include Glu-325 and His-326. 4 residues coordinate substrate: His-326, Asp-359, Glu-413, and His-418. Residue Asp-359 participates in Zn(2+) binding. His-418 lines the Zn(2+) pocket.

Belongs to the histidinol dehydrogenase family. Zn(2+) serves as cofactor.

The enzyme catalyses L-histidinol + 2 NAD(+) + H2O = L-histidine + 2 NADH + 3 H(+). It functions in the pathway amino-acid biosynthesis; L-histidine biosynthesis; L-histidine from 5-phospho-alpha-D-ribose 1-diphosphate: step 9/9. Functionally, catalyzes the sequential NAD-dependent oxidations of L-histidinol to L-histidinaldehyde and then to L-histidine. This Prochlorococcus marinus subsp. pastoris (strain CCMP1986 / NIES-2087 / MED4) protein is Histidinol dehydrogenase.